Here is a 68-residue protein sequence, read N- to C-terminus: Palustrin-1c (68 aa).

Residues 1 to 22 (MFTTKKSLLLLFFLGTISLSLC) form the signal peptide. The propeptide occupies 23 to 39 (EEERGADEEEGDGEKLT). A disulfide bridge connects residues cysteine 62 and cysteine 68.

In terms of tissue distribution, expressed by the skin glands.

The protein resides in the secreted. Functionally, antimicrobial activity against Gram-negative bacterium E.coli. Stimulates insulin release. The polypeptide is Palustrin-1c (Lithobates palustris (Pickerel frog)).